The sequence spans 284 residues: 4-hydroxy-3-methylbut-2-enyl diphosphate reductase (284 aa).

A [4Fe-4S] cluster-binding site is contributed by Cys-12. The (2E)-4-hydroxy-3-methylbut-2-enyl diphosphate site is built by His-40 and His-72. Residues His-40 and His-72 each contribute to the dimethylallyl diphosphate site. His-40 and His-72 together coordinate isopentenyl diphosphate. Cys-94 contacts [4Fe-4S] cluster. His-122 provides a ligand contact to (2E)-4-hydroxy-3-methylbut-2-enyl diphosphate. His-122 contacts dimethylallyl diphosphate. His-122 lines the isopentenyl diphosphate pocket. The Proton donor role is filled by Glu-124. A (2E)-4-hydroxy-3-methylbut-2-enyl diphosphate-binding site is contributed by Thr-161. Cys-193 contacts [4Fe-4S] cluster. (2E)-4-hydroxy-3-methylbut-2-enyl diphosphate-binding residues include Ser-221, Asn-223, and Ser-264. Residues Ser-221, Asn-223, and Ser-264 each contribute to the dimethylallyl diphosphate site. Residues Ser-221, Asn-223, and Ser-264 each coordinate isopentenyl diphosphate.

Belongs to the IspH family. Requires [4Fe-4S] cluster as cofactor.

It carries out the reaction isopentenyl diphosphate + 2 oxidized [2Fe-2S]-[ferredoxin] + H2O = (2E)-4-hydroxy-3-methylbut-2-enyl diphosphate + 2 reduced [2Fe-2S]-[ferredoxin] + 2 H(+). It catalyses the reaction dimethylallyl diphosphate + 2 oxidized [2Fe-2S]-[ferredoxin] + H2O = (2E)-4-hydroxy-3-methylbut-2-enyl diphosphate + 2 reduced [2Fe-2S]-[ferredoxin] + 2 H(+). The protein operates within isoprenoid biosynthesis; dimethylallyl diphosphate biosynthesis; dimethylallyl diphosphate from (2E)-4-hydroxy-3-methylbutenyl diphosphate: step 1/1. It functions in the pathway isoprenoid biosynthesis; isopentenyl diphosphate biosynthesis via DXP pathway; isopentenyl diphosphate from 1-deoxy-D-xylulose 5-phosphate: step 6/6. Catalyzes the conversion of 1-hydroxy-2-methyl-2-(E)-butenyl 4-diphosphate (HMBPP) into a mixture of isopentenyl diphosphate (IPP) and dimethylallyl diphosphate (DMAPP). Acts in the terminal step of the DOXP/MEP pathway for isoprenoid precursor biosynthesis. The polypeptide is 4-hydroxy-3-methylbut-2-enyl diphosphate reductase (Dehalococcoides mccartyi (strain ATCC BAA-2266 / KCTC 15142 / 195) (Dehalococcoides ethenogenes (strain 195))).